The chain runs to 445 residues: 6-phosphogluconate dehydrogenase, decarboxylating (445 aa).

NADP(+) is bound by residues 1 to 4, 22 to 24, 63 to 65, and Asn-91; these read AVMG, NRS, and VKA. Residues Asn-91 and 117-119 contribute to the substrate site; that span reads SGG. The Proton acceptor role is filled by Lys-172. 175-176 contributes to the substrate binding site; sequence HN. The active-site Proton donor is Glu-179. Residues Tyr-180, Lys-249, Arg-276, Arg-434, and His-440 each coordinate substrate.

Belongs to the 6-phosphogluconate dehydrogenase family. Homodimer.

It catalyses the reaction 6-phospho-D-gluconate + NADP(+) = D-ribulose 5-phosphate + CO2 + NADPH. Its pathway is carbohydrate degradation; pentose phosphate pathway; D-ribulose 5-phosphate from D-glucose 6-phosphate (oxidative stage): step 3/3. Its function is as follows. Catalyzes the oxidative decarboxylation of 6-phosphogluconate to ribulose 5-phosphate and CO(2), with concomitant reduction of NADP to NADPH. The chain is 6-phosphogluconate dehydrogenase, decarboxylating (gnd) from Shigella sonnei.